Reading from the N-terminus, the 157-residue chain is Oocyte zinc finger protein XlCOF2 (157 aa).

5 consecutive C2H2-type zinc fingers follow at residues 6–28, 34–56, 79–101, 107–129, and 135–157; these read FTCT…MRIH, YSCA…QKNP, FTCT…QRLH, FSCA…QNTH, and FTCT…QKIH.

The protein belongs to the krueppel C2H2-type zinc-finger protein family.

The protein localises to the nucleus. In terms of biological role, may be involved in transcriptional regulation. The sequence is that of Oocyte zinc finger protein XlCOF2 from Xenopus laevis (African clawed frog).